Here is a 227-residue protein sequence, read N- to C-terminus: 7-cyano-7-deazaguanine synthase (227 aa).

Residue 8–18 (LSGGLDSATVL) participates in ATP binding. Zn(2+)-binding residues include Cys-191, Cys-201, Cys-204, and Cys-207.

This sequence belongs to the QueC family. It depends on Zn(2+) as a cofactor.

The enzyme catalyses 7-carboxy-7-deazaguanine + NH4(+) + ATP = 7-cyano-7-deazaguanine + ADP + phosphate + H2O + H(+). Its pathway is purine metabolism; 7-cyano-7-deazaguanine biosynthesis. Catalyzes the ATP-dependent conversion of 7-carboxy-7-deazaguanine (CDG) to 7-cyano-7-deazaguanine (preQ(0)). The chain is 7-cyano-7-deazaguanine synthase from Paramagnetospirillum magneticum (strain ATCC 700264 / AMB-1) (Magnetospirillum magneticum).